The chain runs to 151 residues: Dehydrin Rab16D (151 aa).

The segment at 1–138 (MEYQGQHGGH…TADAGGEKKG (138 aa)) is disordered. Basic and acidic residues predominate over residues 39–51 (EPAREDKKTDGVL). Low complexity-rich tracts occupy residues 90 to 105 (GNNQQQQQEHTTTTTG) and 117 to 132 (IATGAHGGTAATTADA).

The protein belongs to the plant dehydrin family.

This is Dehydrin Rab16D (RAB16D) from Oryza sativa subsp. indica (Rice).